A 267-amino-acid polypeptide reads, in one-letter code: Tryptophan synthase alpha chain (267 aa).

Catalysis depends on proton acceptor residues glutamate 49 and aspartate 60.

Belongs to the TrpA family. As to quaternary structure, tetramer of two alpha and two beta chains.

It catalyses the reaction (1S,2R)-1-C-(indol-3-yl)glycerol 3-phosphate + L-serine = D-glyceraldehyde 3-phosphate + L-tryptophan + H2O. Its pathway is amino-acid biosynthesis; L-tryptophan biosynthesis; L-tryptophan from chorismate: step 5/5. The alpha subunit is responsible for the aldol cleavage of indoleglycerol phosphate to indole and glyceraldehyde 3-phosphate. The chain is Tryptophan synthase alpha chain from Acinetobacter baumannii (strain AB307-0294).